The following is a 118-amino-acid chain: MASQSQGIQQLLQAEKRAAEKVADARKRKARRLKQAKEEAQMEVEQYRREREQEFQSKQQAAMGSQGNLSAEVEQATRRQVQGMQSSQQRNRERVLAQLLGMVCDVRPQVHPNYRISA.

Residues 23–90 are disordered; sequence ADARKRKARR…VQGMQSSQQR (68 aa). The span at 35–55 shows a compositional bias: basic and acidic residues; that stretch reads QAKEEAQMEVEQYRREREQEF. Polar residues-rich tracts occupy residues 56–69 and 78–89; these read QSKQ…QGNL and RRQVQGMQSSQQ.

It belongs to the V-ATPase G subunit family. V-ATPase is a heteromultimeric enzyme made up of two complexes: the ATP-hydrolytic V1 complex and the proton translocation V0 complex. The V1 complex consists of three catalytic AB heterodimers that form a heterohexamer, three peripheral stalks each consisting of EG heterodimers, one central rotor including subunits D and F, and the regulatory subunits C and H. The proton translocation complex V0 consists of the proton transport subunit a, a ring of proteolipid subunits c9c'', rotary subunit d, subunits e and f, and the accessory subunits ATP6AP1/Ac45 and ATP6AP2/PRR.

The protein resides in the melanosome. It is found in the cytoplasmic vesicle. The protein localises to the clathrin-coated vesicle membrane. Its function is as follows. Subunit of the V1 complex of vacuolar(H+)-ATPase (V-ATPase), a multisubunit enzyme composed of a peripheral complex (V1) that hydrolyzes ATP and a membrane integral complex (V0) that translocates protons. V-ATPase is responsible for acidifying and maintaining the pH of intracellular compartments and in some cell types, is targeted to the plasma membrane, where it is responsible for acidifying the extracellular environment. This is V-type proton ATPase subunit G 2 (ATP6V1G2) from Macaca mulatta (Rhesus macaque).